A 556-amino-acid chain; its full sequence is Innexin-7 (556 aa).

The next 3 helical transmembrane spans lie at 21–41 (LVASIHSFLTSNLLVGLAVLI), 127–147 (FFLLFEAACFRLPCFIWKYFA), and 213–233 (AYYVTFIYFVAKVAFLLNVIL). N-linked (GlcNAc...) asparagine glycosylation is present at Asn267. The helical transmembrane segment at 310-330 (IFVFLWAWYILLTAFTVGNLF) threads the bilayer. Residues 431–556 (DESQVESGKN…IPKTAEKKHW (126 aa)) form a disordered region. Residues 435–447 (VESGKNTAPSTSH) show a composition bias toward polar residues. A compositionally biased stretch (basic and acidic residues) spans 452 to 461 (RGTEQLEKNV). Polar residues predominate over residues 463-474 (SRQGSLSTQLRP). The span at 500-513 (KGSKKPSPTKKKAS) shows a compositional bias: basic residues. Positions 514 to 527 (SKNSPQSSSNSRRP) are enriched in low complexity. The span at 539-556 (HHHEPDSKIPKTAEKKHW) shows a compositional bias: basic and acidic residues.

The protein belongs to the pannexin family.

It localises to the cell membrane. The protein resides in the cell junction. Its subcellular location is the gap junction. Structural component of the gap junctions. The chain is Innexin-7 (inx-7) from Caenorhabditis elegans.